The following is a 444-amino-acid chain: Transcription activator AFTR-2 (444 aa).

A DNA-binding region (zn(2)-C6 fungal-type) is located at residues 16–43; sequence CDFCTQSKLRCNKNKPSCRRCTLQQQPC. A disordered region spans residues 49 to 88; that stretch reads RRTGRPPKHPRKANDCQEANGQHGDQDPVTSTPGGSYQQQ. The segment covering 50 to 59 has biased composition (basic residues); that stretch reads RTGRPPKHPR. Over residues 76 to 88 the composition is skewed to polar residues; it reads PVTSTPGGSYQQQ.

The protein resides in the nucleus. Functionally, transcription factor that regulates the expression of the gene clusters that mediate the biosynthesis of the host-selective toxins (HSTs) AF-toxins responsible for Alternaria black spot of strawberry disease by the strawberry pathotype. On cellular level, AF-toxins affect plasma membrane of susceptible cells and cause a sudden increase in loss of K(+) after a few minutes of toxin treatment. In Alternaria alternata (Alternaria rot fungus), this protein is Transcription activator AFTR-2.